A 717-amino-acid polypeptide reads, in one-letter code: DNA ligase (717 aa).

NAD(+)-binding positions include 44 to 48 (DADYD), 93 to 94 (SL), and Glu127. The active-site N6-AMP-lysine intermediate is Lys129. Residues Arg150, Glu186, Lys302, and Lys326 each contribute to the NAD(+) site. Positions 431, 434, 455, and 461 each coordinate Zn(2+). The 79-residue stretch at 639 to 717 (ATDSPVAGKT…EDEWLALIGG (79 aa)) folds into the BRCT domain.

It belongs to the NAD-dependent DNA ligase family. LigA subfamily. The cofactor is Mg(2+). It depends on Mn(2+) as a cofactor.

It carries out the reaction NAD(+) + (deoxyribonucleotide)n-3'-hydroxyl + 5'-phospho-(deoxyribonucleotide)m = (deoxyribonucleotide)n+m + AMP + beta-nicotinamide D-nucleotide.. Its function is as follows. DNA ligase that catalyzes the formation of phosphodiester linkages between 5'-phosphoryl and 3'-hydroxyl groups in double-stranded DNA using NAD as a coenzyme and as the energy source for the reaction. It is essential for DNA replication and repair of damaged DNA. The chain is DNA ligase from Sinorhizobium medicae (strain WSM419) (Ensifer medicae).